A 2210-amino-acid polypeptide reads, in one-letter code: Filamin-A (2210 aa).

2 consecutive Calponin-homology (CH) domains span residues 15 to 120 (KIQQ…LHYS) and 139 to 242 (HTPK…NSKL). 20 Filamin repeats span residues 249–347 (RPKT…PVKV), 349–447 (GHAG…PVKV), 448–544 (APLS…EVKV), 545–635 (GPKK…IAQI), 638–734 (RTDF…RVYV), 735–831 (GVPV…VVVE), 832–929 (QTVD…VVNV), 930–1022 (KSGC…RVLV), 1023–1121 (EETV…VMTV), 1122–1217 (FPKS…KLEA), 1218–1312 (FPTG…SIKA), 1322–1423 (SEYI…KFHV), 1424–1515 (DSIT…FAKI), 1516–1603 (TGEG…KVTV), 1606–1698 (REVG…TVKV), 1699–1796 (AGEG…QFTV), 1799–1891 (LRDS…KVYV), 1893–1986 (PDAG…RIKV), 1988–2079 (KDVA…KVNA), and 2116–2210 (TFKS…QIDV).

Belongs to the filamin family. In terms of assembly, interacts with Ten-m. As to expression, germline-specific in females (at protein level). Expressed in ovary.

Its subcellular location is the cytoplasm. The protein localises to the cytoskeleton. It localises to the cell membrane. Its function is as follows. Involved in the germline ring canal formation. May tether actin microfilament within the ovarian ring canal to the cell membrane. Contributes to actin microfilaments organization. In Drosophila melanogaster (Fruit fly), this protein is Filamin-A (cher).